Reading from the N-terminus, the 233-residue chain is Glutathione S-transferase U15 (233 aa).

The GST N-terminal domain maps to 5–85 (EEVKLLGTWY…YIDETWNSSG (81 aa)). Glutathione contacts are provided by residues 15-16 (SP), 42-43 (SK), 56-57 (KV), and 69-70 (VS). The 128-residue stretch at 92–219 (HPYDRALARF…VPDIDKVAKF (128 aa)) folds into the GST C-terminal domain. The residue at position 158 (T158) is a Phosphothreonine.

Belongs to the GST superfamily. Tau family.

Its subcellular location is the cytoplasm. The protein resides in the cytosol. The enzyme catalyses RX + glutathione = an S-substituted glutathione + a halide anion + H(+). In terms of biological role, may be involved in the conjugation of reduced glutathione to a wide number of exogenous and endogenous hydrophobic electrophiles and have a detoxification role against certain herbicides. The sequence is that of Glutathione S-transferase U15 (GSTU15) from Arabidopsis thaliana (Mouse-ear cress).